Here is a 482-residue protein sequence, read N- to C-terminus: Immune evasion protein OPG047 (482 aa).

The BTB domain occupies 20–90; sequence KKFKTIIEAI…SYTGKVYIDS (71 aa). The BACK domain occupies 125–222; sequence CIECYMMGIE…SNYLSPRGIH (98 aa). Kelch repeat units lie at residues 273–319, 320–363, 365–408, 410–447, and 448–482; these read VVYL…PANN, KLYV…SINN, IYVM…VFGR, LFLV…IVDN, and KLLL…GMEW.

The protein belongs to the orthopoxvirus OPG047 family.

Might have a role in the suppression of host immune response. This is Immune evasion protein OPG047 (OPG047) from Cynomys gunnisoni (Gunnison's prairie dog).